The sequence spans 1017 residues: Anaphase-promoting complex subunit 5 (1017 aa).

TPR repeat units lie at residues 30-63 (KQSL…EKEL), 182-214 (DMSM…SPLD), 252-286 (VKRV…VNGQ), 337-370 (PYAV…AQER), and 508-541 (NNNN…WNDI). Low complexity predominate over residues 451-525 (INSNNYNSNN…NNNSSNSNNN (75 aa)). Disordered stretches follow at residues 451–527 (INSN…NNGG) and 617–636 (NNNN…QQQN). 5 TPR repeats span residues 642 to 675 (LLSF…YKTQ), 756 to 790 (VICY…SRDF), 838 to 871 (ADSN…VLSD), 876 to 908 (SQLY…FLQL), and 931 to 964 (KEIY…LVPS).

The protein belongs to the APC5 family. In terms of assembly, the APC/C is composed of at least 13 subunits that stay tightly associated throughout the cell cycle: anapc1, anapc2, anapc3, anapc4, anapc5, anapc6, anapc7, anapc8, anapc10, anapc11, cdc20, cdc26 and cdh1.

It is found in the nucleus. Its pathway is protein modification; protein ubiquitination. Functionally, component of the anaphase promoting complex/cyclosome (APC/C), a cell cycle-regulated E3 ubiquitin-protein ligase complex that controls progression through mitosis and the G1 phase of the cell cycle. This chain is Anaphase-promoting complex subunit 5 (anapc5), found in Dictyostelium discoideum (Social amoeba).